We begin with the raw amino-acid sequence, 492 residues long: Steroid 21-hydroxylase (492 aa).

Heme b-binding residues include arginine 91 and lysine 120. Residue arginine 231 participates in 17alpha-hydroxyprogesterone binding. A progesterone-binding site is contributed by arginine 231. The heme b site is built by histidine 363, arginine 424, and cysteine 426.

It belongs to the cytochrome P450 family. It depends on heme b as a cofactor.

It is found in the endoplasmic reticulum membrane. It localises to the microsome membrane. It catalyses the reaction 17alpha-hydroxyprogesterone + reduced [NADPH--hemoprotein reductase] + O2 = 11-deoxycortisol + oxidized [NADPH--hemoprotein reductase] + H2O + H(+). The catalysed reaction is progesterone + reduced [NADPH--hemoprotein reductase] + O2 = 21-hydroxyprogesterone + oxidized [NADPH--hemoprotein reductase] + H2O + H(+). Its function is as follows. Specifically catalyzes the 21-hydroxylation of steroids. Required for the adrenal synthesis of mineralocorticoids and glucocorticoids. The protein is Steroid 21-hydroxylase (CYP21) of Lynx lynx (Eurasian lynx).